The sequence spans 225 residues: Protein YIP4 (225 aa).

Phosphoserine occurs at positions 27 and 28. The next 5 helical transmembrane spans lie at W91–T111, S118–I138, L154–I176, V180–S199, and K205–L225.

The protein belongs to the YIP1 family. As to quaternary structure, interacts with the YIP1 family members yip1 and yip5, and with several Rab GTPases.

The protein localises to the membrane. May be involved in proper membrane localization of Rab GTPases. The chain is Protein YIP4 from Schizosaccharomyces pombe (strain 972 / ATCC 24843) (Fission yeast).